A 251-amino-acid polypeptide reads, in one-letter code: Hydroxyacylglutathione hydrolase (251 aa).

Zn(2+)-binding residues include H53, H55, D57, H58, H110, D127, and H165.

This sequence belongs to the metallo-beta-lactamase superfamily. Glyoxalase II family. As to quaternary structure, monomer. Requires Zn(2+) as cofactor.

It catalyses the reaction an S-(2-hydroxyacyl)glutathione + H2O = a 2-hydroxy carboxylate + glutathione + H(+). The protein operates within secondary metabolite metabolism; methylglyoxal degradation; (R)-lactate from methylglyoxal: step 2/2. In terms of biological role, thiolesterase that catalyzes the hydrolysis of S-D-lactoyl-glutathione to form glutathione and D-lactic acid. This is Hydroxyacylglutathione hydrolase from Escherichia coli O45:K1 (strain S88 / ExPEC).